We begin with the raw amino-acid sequence, 206 residues long: Ribosomal RNA large subunit methyltransferase E (206 aa).

Positions 60, 62, 80, 96, and 121 each coordinate S-adenosyl-L-methionine. The active-site Proton acceptor is lysine 161.

The protein belongs to the class I-like SAM-binding methyltransferase superfamily. RNA methyltransferase RlmE family.

The protein localises to the cytoplasm. The catalysed reaction is uridine(2552) in 23S rRNA + S-adenosyl-L-methionine = 2'-O-methyluridine(2552) in 23S rRNA + S-adenosyl-L-homocysteine + H(+). In terms of biological role, specifically methylates the uridine in position 2552 of 23S rRNA at the 2'-O position of the ribose in the fully assembled 50S ribosomal subunit. The chain is Ribosomal RNA large subunit methyltransferase E from Nitrosomonas europaea (strain ATCC 19718 / CIP 103999 / KCTC 2705 / NBRC 14298).